Here is a 169-residue protein sequence, read N- to C-terminus: Lutropin/choriogonadotropin subunit beta (169 aa).

A signal peptide spans 1–20 (MEMLQGLLLWMLLSVGGVWA). Intrachain disulfides connect cysteine 29-cysteine 77, cysteine 43-cysteine 92, cysteine 46-cysteine 130, cysteine 54-cysteine 108, cysteine 58-cysteine 110, and cysteine 113-cysteine 120. Asparagine 33 is a glycosylation site (N-linked (GlcNAc...) asparagine). A disordered region spans residues 131-169 (APQASSSSKDPPSQPLTSTSTPTPGASNRSSHPLPIKTS). Residues 145-154 (PLTSTSTPTP) are compositionally biased toward low complexity. The span at 155-169 (GASNRSSHPLPIKTS) shows a compositional bias: polar residues. An N-linked (GlcNAc...) asparagine glycan is attached at asparagine 158.

This sequence belongs to the glycoprotein hormones subunit beta family. As to quaternary structure, heterodimer of a common alpha chain and a unique beta chain which confers biological specificity to thyrotropin, lutropin, follitropin and gonadotropin.

It is found in the secreted. Promotes spermatogenesis and ovulation by stimulating the testes and ovaries to synthesize steroids. This is Lutropin/choriogonadotropin subunit beta (LHB) from Equus quagga burchellii (Burchell's zebra).